The following is a 556-amino-acid chain: Arginine--tRNA ligase (556 aa).

A 'HIGH' region motif is present at residues 134–144 (ANPTGPLHIGH).

This sequence belongs to the class-I aminoacyl-tRNA synthetase family. Monomer.

It is found in the cytoplasm. The catalysed reaction is tRNA(Arg) + L-arginine + ATP = L-arginyl-tRNA(Arg) + AMP + diphosphate. The protein is Arginine--tRNA ligase of Micrococcus luteus (strain ATCC 4698 / DSM 20030 / JCM 1464 / CCM 169 / CCUG 5858 / IAM 1056 / NBRC 3333 / NCIMB 9278 / NCTC 2665 / VKM Ac-2230) (Micrococcus lysodeikticus).